Consider the following 255-residue polypeptide: Diphthine synthase (255 aa).

Residues Leu-9, Asp-85, Val-88, Ser-113–Ile-114, Leu-164, Ala-207, and His-232 contribute to the S-adenosyl-L-methionine site.

It belongs to the diphthine synthase family. Homodimer.

The enzyme catalyses 2-[(3S)-amino-3-carboxypropyl]-L-histidyl-[translation elongation factor 2] + 3 S-adenosyl-L-methionine = diphthine-[translation elongation factor 2] + 3 S-adenosyl-L-homocysteine + 3 H(+). The protein operates within protein modification; peptidyl-diphthamide biosynthesis. Its function is as follows. S-adenosyl-L-methionine-dependent methyltransferase that catalyzes the trimethylation of the amino group of the modified target histidine residue in translation elongation factor 2 (EF-2), to form an intermediate called diphthine. The three successive methylation reactions represent the second step of diphthamide biosynthesis. The chain is Diphthine synthase from Methanococcus maripaludis (strain DSM 14266 / JCM 13030 / NBRC 101832 / S2 / LL).